We begin with the raw amino-acid sequence, 396 residues long: Small ribosomal subunit protein uS9m (396 aa).

Lys-287 carries the post-translational modification N6-acetyllysine. The disordered stretch occupies residues 374-396 (PRVRERKKPGQEGARRKFTWKKR).

Belongs to the universal ribosomal protein uS9 family. As to quaternary structure, component of the mitochondrial small ribosomal subunit (mt-SSU). Mature mammalian 55S mitochondrial ribosomes consist of a small (28S) and a large (39S) subunit. The 28S small subunit contains a 12S ribosomal RNA (12S mt-rRNA) and 30 different proteins. The 39S large subunit contains a 16S rRNA (16S mt-rRNA), a copy of mitochondrial valine transfer RNA (mt-tRNA(Val)), which plays an integral structural role, and 52 different proteins.

The protein resides in the mitochondrion. This chain is Small ribosomal subunit protein uS9m (MRPS9), found in Homo sapiens (Human).